Reading from the N-terminus, the 245-residue chain is 1-(5-phosphoribosyl)-5-[(5-phosphoribosylamino)methylideneamino] imidazole-4-carboxamide isomerase (245 aa).

Aspartate 7 (proton acceptor) is an active-site residue. The Proton donor role is filled by aspartate 129.

The protein belongs to the HisA/HisF family.

The protein localises to the cytoplasm. It carries out the reaction 1-(5-phospho-beta-D-ribosyl)-5-[(5-phospho-beta-D-ribosylamino)methylideneamino]imidazole-4-carboxamide = 5-[(5-phospho-1-deoxy-D-ribulos-1-ylimino)methylamino]-1-(5-phospho-beta-D-ribosyl)imidazole-4-carboxamide. It participates in amino-acid biosynthesis; L-histidine biosynthesis; L-histidine from 5-phospho-alpha-D-ribose 1-diphosphate: step 4/9. The polypeptide is 1-(5-phosphoribosyl)-5-[(5-phosphoribosylamino)methylideneamino] imidazole-4-carboxamide isomerase (Escherichia coli O127:H6 (strain E2348/69 / EPEC)).